Here is a 377-residue protein sequence, read N- to C-terminus: Flagellin C (377 aa).

2 coiled-coil regions span residues 103 to 129 and 301 to 340; these read SNSK…VAET and VDSH…KDTD.

This sequence belongs to the bacterial flagellin family. As to quaternary structure, heteromer of multiple flagellin subunits including FlaA, FlaB, FlaC, FlaD and FlaE.

The protein resides in the secreted. It localises to the bacterial flagellum. In terms of biological role, flagellin is the subunit protein which polymerizes to form the filaments of bacterial flagella. FlaC is not essential for flagellar synthesis and motility. The chain is Flagellin C (flaC) from Vibrio cholerae serotype O1 (strain ATCC 39541 / Classical Ogawa 395 / O395).